Reading from the N-terminus, the 159-residue chain is Nascent polypeptide-associated complex subunit beta (159 aa).

Disordered regions lie at residues 1–39 (MDMEKLKRMQARGGVRTGDGKGTPRRKVKNVHKSTGMDD) and 121–159 (ESYQSMQKAEGGEDKKDDDEDDDDIPDLVEGENFEDKVE). Over residues 23–32 (TPRRKVKNVH) the composition is skewed to basic residues. The region spanning 36-101 (GMDDKKLQTS…GEDKELTELV (66 aa)) is the NAC-A/B domain. Acidic residues predominate over residues 136-153 (KDDDEDDDDIPDLVEGEN).

This sequence belongs to the NAC-beta family. In terms of assembly, part of the nascent polypeptide-associated complex (NAC), consisting of EGD2 and EGD1. NAC associates with ribosomes via EGD1.

It localises to the cytoplasm. Its subcellular location is the nucleus. Its function is as follows. Component of the nascent polypeptide-associated complex (NAC), a dynamic component of the ribosomal exit tunnel, protecting the emerging polypeptides from interaction with other cytoplasmic proteins to ensure appropriate nascent protein targeting. The NAC complex also promotes mitochondrial protein import by enhancing productive ribosome interactions with the outer mitochondrial membrane and blocks the inappropriate interaction of ribosomes translating non-secretory nascent polypeptides with translocation sites in the membrane of the endoplasmic reticulum. EGD1 may act as a transcription factor that exert a negative effect on the expression of several genes that are transcribed by RNA polymerase II. The sequence is that of Nascent polypeptide-associated complex subunit beta (egd1) from Botryotinia fuckeliana (strain B05.10) (Noble rot fungus).